Reading from the N-terminus, the 111-residue chain is Small ribosomal subunit protein bS16 (111 aa).

The protein belongs to the bacterial ribosomal protein bS16 family.

This Rickettsia canadensis (strain McKiel) protein is Small ribosomal subunit protein bS16.